The primary structure comprises 270 residues: MRIALGIQYDGAAFCGWQAQPHGKTVQDRLEHALAEFARVPLHTTVAGRTDTGVHGLGQVVHFDTDLEREVFSWVRGTNAFLPSTVSVQWAKPMPDTFHARFSAFERTYYYALYVHPVRSPMLAGRAGWIHTPLDDDAMRAAAAHLIGEHDFSSFRSSECQSKTPVKHLYQIDVRRAGHFIHFRFRANAFLHHMVRNLMGCLVAVGRGRYPADWLADVLAGRDRNLAAPTFMADGLYLAHVGYPAEFAVPPAQLGSVPWSSVWADLDPQT.

Catalysis depends on Asp-51, which acts as the Nucleophile. Tyr-109 is a substrate binding site.

This sequence belongs to the tRNA pseudouridine synthase TruA family. Homodimer.

It catalyses the reaction uridine(38/39/40) in tRNA = pseudouridine(38/39/40) in tRNA. Functionally, formation of pseudouridine at positions 38, 39 and 40 in the anticodon stem and loop of transfer RNAs. This Burkholderia orbicola (strain MC0-3) protein is tRNA pseudouridine synthase A.